A 222-amino-acid chain; its full sequence is Voltage-dependent calcium channel gamma-1 subunit (222 aa).

Topologically, residues 1–10 are cytoplasmic; that stretch reads MSQTKMLKVR. Residues 11–29 form a helical membrane-spanning segment; that stretch reads VTLFCILAGIVLAMTAVVT. The Extracellular portion of the chain corresponds to 30–108; sequence DHWAVLSPHM…TQKEYSISAA (79 aa). N43 and N79 each carry an N-linked (GlcNAc...) asparagine glycan. A disulfide bridge links C57 with C80. A helical transmembrane segment spans residues 109 to 129; sequence AIAIFSLGFIILGSLCVLLSL. Residues 130–134 are Cytoplasmic-facing; it reads GKKRD. Residues 135–155 form a helical membrane-spanning segment; the sequence is YLLRPASMFYAFAGLCILVSV. Residues 156–179 are Extracellular-facing; it reads EVMRQSVKRMIDSEDTVWIEYYYS. Residues 180-204 form a helical membrane-spanning segment; sequence WSFACACAAFILLFLGGLALLLFSL. Residues 205–222 are Cytoplasmic-facing; sequence PRMPRNPWESCMDAEPEH.

Belongs to the PMP-22/EMP/MP20 family. CACNG subfamily. In terms of assembly, component of a calcium channel complex consisting of a pore-forming alpha subunit (CACNA1S) and the ancillary subunits CACNB1 or CACNB2, CACNG1 and CACNA2D1. The channel complex contains alpha, beta, gamma and delta subunits in a 1:1:1:1 ratio, i.e. it contains either CACNB1 or CACNB2. In terms of processing, N-glycosylated. Skeletal muscle.

It localises to the cell membrane. Its subcellular location is the sarcolemma. In terms of biological role, regulatory subunit of the voltage-gated calcium channel that gives rise to L-type calcium currents in skeletal muscle. Regulates channel inactivation kinetics. The chain is Voltage-dependent calcium channel gamma-1 subunit (CACNG1) from Homo sapiens (Human).